We begin with the raw amino-acid sequence, 247 residues long: uncharacterized protein (247 aa).

6 helical membrane passes run 19 to 39 (IFFT…SIMF), 73 to 93 (FFTS…AFFI), 106 to 126 (FLSF…YFII), 155 to 175 (YIQF…CPLF), 196 to 216 (YIYF…ILSQ), and 217 to 237 (FFLF…SCFY).

The protein belongs to the TatC family.

It localises to the mitochondrion membrane. This is an uncharacterized protein from Nephroselmis olivacea (Green alga).